The following is a 128-amino-acid chain: Azurin (128 aa).

Positions 1–128 constitute a Plastocyanin-like domain; sequence ACDVSIEGND…IMKGTIELGS (128 aa). A disulfide bond links Cys2 and Cys25. Cu cation is bound by residues His45, Cys111, His116, and Met120.

As to quaternary structure, monomer. Interacts with the AAUA/AAUB heterotetramer complex. Cu cation serves as cofactor.

The protein localises to the periplasm. Transfers electrons from cytochrome c551 to cytochrome oxidase. Transfers electrons from the tryptophan tryptophylquinone of the aromatic amine dehydrogenase heterotetramer. This chain is Azurin, found in Alcaligenes faecalis.